A 121-amino-acid polypeptide reads, in one-letter code: Large ribosomal subunit protein uL14 (121 aa).

This sequence belongs to the universal ribosomal protein uL14 family. In terms of assembly, part of the 50S ribosomal subunit. Forms a cluster with proteins L3 and L19. In the 70S ribosome, L14 and L19 interact and together make contacts with the 16S rRNA in bridges B5 and B8.

Binds to 23S rRNA. Forms part of two intersubunit bridges in the 70S ribosome. The sequence is that of Large ribosomal subunit protein uL14 from Pseudoalteromonas atlantica (strain T6c / ATCC BAA-1087).